The following is a 310-amino-acid chain: Beta-1,3-galactosyltransferase 5 (310 aa).

Over 1-7 (MAFPKMR) the chain is Cytoplasmic. A helical; Signal-anchor for type II membrane protein transmembrane segment spans residues 8–28 (LMYICLLVLGALCLYFSMYSL). At 29-310 (NPFKEQSFVY…NSRGEDCPPV (282 aa)) the chain is on the lumenal side. N-linked (GlcNAc...) asparagine glycans are attached at residues N130, N174, and N231.

It belongs to the glycosyltransferase 31 family. In terms of tissue distribution, expressed in stomach, jejunum, colon, pancreas, small intestine, testis and gastrointestinal and pancreatic cancer cell lines. Hardly detected in lung, liver, adrenal gland and peripheral blood leukocytes.

The protein resides in the golgi apparatus membrane. It carries out the reaction a globoside Gb4Cer (d18:1(4E)) + UDP-alpha-D-galactose = a globoside GalGb4Cer (d18:1(4E)) + UDP + H(+). It participates in protein modification; protein glycosylation. Functionally, catalyzes the transfer of Gal to GlcNAc-based acceptors with a preference for the core3 O-linked glycan GlcNAc(beta1,3)GalNAc structure. Can use glycolipid LC3Cer as an efficient acceptor. The protein is Beta-1,3-galactosyltransferase 5 of Homo sapiens (Human).